Reading from the N-terminus, the 745-residue chain is Junction plakoglobin (745 aa).

N-acetylmethionine is present on Met-1. O-linked (GlcNAc) threonine glycosylation is present at Thr-14. A phosphoserine mark is found at Ser-99 and Ser-125. ARM repeat units lie at residues 132 to 171, 172 to 215, 216 to 255, 258 to 297, 298 to 341, 342 to 381, 383 to 420, 423 to 464, 470 to 510, 512 to 551, 574 to 613, and 615 to 661; these read NYQD…QLSK, KEAS…LSHH, REGL…NLLL, EGAK…LLAY, GNQE…LSVC, PSNK…NLSD, ATKQ…NLTC, SKNK…HLTS, EMAQ…NLAL, PANH…QPYT, PMNR…ELAQ, and KEAA…PDYR. The tract at residues 132–297 is interaction with DSC1 and DSG1; that stretch reads NYQDDAELAT…TTDCLQLLAY (166 aa). Residue Ser-182 is modified to Phosphoserine. The segment at 574–661 is interaction with DSC1; sequence PMNRMEIFRL…ISEDKNPDYR (88 aa). 2 positions are modified to phosphoserine: Ser-665 and Ser-730.

This sequence belongs to the beta-catenin family. As to quaternary structure, homodimer. Component of an E-cadherin/catenin adhesion complex composed of at least E-cadherin/CDH1 and gamma-catenin/JUP, and possibly alpha-catenin/CTNNA1; the complex is located to adherens junctions. The stable association of CTNNA1 is controversial as CTNNA1 was shown not to bind to F-actin when assembled in the complex. Interacts with MUC1. Interacts with CAV1. Interacts with PTPRJ. Interacts with DSG1. Interacts with DSC1 and DSC2. Interacts with PKP2. Interacts with PKP3 (via N-terminus); the interaction is required for PKP3 localization to desmosome cell-cell junctions. Interacts with DSG4. In terms of processing, may be phosphorylated by FER. As to expression, expressed in the mammary epithelium (at protein level).

The protein resides in the cell junction. The protein localises to the adherens junction. It localises to the desmosome. It is found in the cytoplasm. Its subcellular location is the cytoskeleton. The protein resides in the cell membrane. The protein localises to the nucleus. Common junctional plaque protein. The membrane-associated plaques are architectural elements in an important strategic position to influence the arrangement and function of both the cytoskeleton and the cells within the tissue. The presence of plakoglobin in both the desmosomes and in the intermediate junctions suggests that it plays a central role in the structure and function of submembranous plaques. Acts as a substrate for VE-PTP and is required by it to stimulate VE-cadherin function in endothelial cells. Can replace beta-catenin in E-cadherin/catenin adhesion complexes which are proposed to couple cadherins to the actin cytoskeleton. In Mus musculus (Mouse), this protein is Junction plakoglobin.